We begin with the raw amino-acid sequence, 580 residues long: Acyl-coenzyme A synthetase ACSM4, mitochondrial (580 aa).

The N-terminal 22 residues, 1–22 (MKVLLHCQRLRFIWLAKPAGRH), are a transit peptide targeting the mitochondrion. Residues 229 to 237 (TSGTTGSPK), 368 to 373 (EGYGQT), aspartate 455, arginine 470, and lysine 566 each bind ATP.

The protein belongs to the ATP-dependent AMP-binding enzyme family. It depends on Mg(2+) as a cofactor. Requires Mn(2+) as cofactor.

It localises to the mitochondrion. The catalysed reaction is a medium-chain fatty acid + ATP + CoA = a medium-chain fatty acyl-CoA + AMP + diphosphate. The enzyme catalyses hexanoate + ATP + CoA = hexanoyl-CoA + AMP + diphosphate. It catalyses the reaction octanoate + ATP + CoA = octanoyl-CoA + AMP + diphosphate. It carries out the reaction decanoate + ATP + CoA = decanoyl-CoA + AMP + diphosphate. The catalysed reaction is dodecanoate + ATP + CoA = dodecanoyl-CoA + AMP + diphosphate. Catalyzes the activation of fatty acids by CoA to produce an acyl-CoA, the first step in fatty acid metabolism. Capable of activating medium-chain fatty acids with a preference for C6-12 fatty acids. This chain is Acyl-coenzyme A synthetase ACSM4, mitochondrial (Acsm4), found in Mus musculus (Mouse).